The sequence spans 310 residues: Uracil phosphoribosyltransferase homolog (310 aa).

2 disordered regions span residues 1–27 (MASE…PSPE) and 62–89 (SERD…GNYD). Residues 16–25 (RQVNSTSSPS) are compositionally biased toward polar residues. Residue Ser25 is modified to Phosphoserine. GTP contacts are provided by residues Arg134, Arg143, and 177 to 180 (EKGN). Residue Arg187 participates in 5-phospho-alpha-D-ribose 1-diphosphate binding. The GTP site is built by Arg204 and Arg233. 239–247 (YPILSTGNT) contacts 5-phospho-alpha-D-ribose 1-diphosphate. 300–302 (THF) contributes to the uracil binding site.

The protein belongs to the UPRTase family.

The protein resides in the cytoplasm. It localises to the nucleus. This is Uracil phosphoribosyltransferase homolog (Uprt) from Mus musculus (Mouse).